The sequence spans 91 residues: Potassium channel toxin MeuTXK-beta-1 (91 aa).

The signal sequence occupies residues 1–19 (MQRNLVVLLFLGMVALSSC). Positions 54 to 91 (QFGCPAYQGYCDDHCQDIEKKEGFCHGFKCKCGIPMGF) constitute a BetaSPN-type CS-alpha/beta domain. Cystine bridges form between cysteine 57/cysteine 78, cysteine 64/cysteine 83, and cysteine 68/cysteine 85.

As to expression, expressed by the venom gland.

The protein localises to the secreted. In terms of biological role, has a low affinity binding to potassium channels of rat brain synaptosomes. Displays weak antibacterial activity against Stenotrophomonas sp. Strongly inhibits the development of the Plasmodium berghei ookinetes. Displays slight hemolytic effect on mouse erythrocytes. Induces cytolysis on Xenopus oocytes at high concentrations. Is not toxic towards mice and towards the insect Tenebrio molitor. The polypeptide is Potassium channel toxin MeuTXK-beta-1 (Mesobuthus eupeus (Lesser Asian scorpion)).